Reading from the N-terminus, the 467-residue chain is Ethanolamine-phosphate phospho-lyase homolog 1 (467 aa).

Lys307 is subject to N6-(pyridoxal phosphate)lysine.

It belongs to the class-III pyridoxal-phosphate-dependent aminotransferase family. It depends on pyridoxal 5'-phosphate as a cofactor.

The sequence is that of Ethanolamine-phosphate phospho-lyase homolog 1 from Caenorhabditis elegans.